We begin with the raw amino-acid sequence, 173 residues long: NADH-ubiquinone oxidoreductase chain 6 (173 aa).

A run of 6 helical transmembrane segments spans residues 1–21, 27–47, 48–68, 87–107, 113–133, and 139–159; these read MTYF…AVAS, YGVV…LSLG, VSFV…VVFV, VVGY…VGGF, FGVV…FSGV, and CGVG…FVVL.

It belongs to the complex I subunit 6 family.

The protein resides in the mitochondrion membrane. The catalysed reaction is a ubiquinone + NADH + 5 H(+)(in) = a ubiquinol + NAD(+) + 4 H(+)(out). Functionally, core subunit of the mitochondrial membrane respiratory chain NADH dehydrogenase (Complex I) that is believed to belong to the minimal assembly required for catalysis. Complex I functions in the transfer of electrons from NADH to the respiratory chain. The immediate electron acceptor for the enzyme is believed to be ubiquinone. This chain is NADH-ubiquinone oxidoreductase chain 6 (MT-ND6), found in Cepphus grylle (Black guillemot).